The chain runs to 248 residues: Probable transcriptional regulatory protein Atu3727 (248 aa).

Positions 1 to 21 are disordered; it reads MAGHSQFKNIMHRKGKQDSVR.

The protein belongs to the TACO1 family.

The protein localises to the cytoplasm. The protein is Probable transcriptional regulatory protein Atu3727 of Agrobacterium fabrum (strain C58 / ATCC 33970) (Agrobacterium tumefaciens (strain C58)).